The sequence spans 357 residues: GPI mannosyltransferase 2 (357 aa).

8 consecutive transmembrane segments (helical) span residues T6–P26, A86–L106, I128–L148, V167–F187, G201–L221, Y257–Y277, L286–V306, and Y334–L354.

This sequence belongs to the PIGV family.

The protein resides in the endoplasmic reticulum membrane. The protein operates within glycolipid biosynthesis; glycosylphosphatidylinositol-anchor biosynthesis. In terms of biological role, mannosyltransferase involved in glycosylphosphatidylinositol-anchor biosynthesis. Transfers the second mannose to the glycosylphosphatidylinositol during GPI precursor assembly. This chain is GPI mannosyltransferase 2 (GPI18), found in Yarrowia lipolytica (strain CLIB 122 / E 150) (Yeast).